The sequence spans 146 residues: Prolactin-inducible protein homolog (146 aa).

The first 26 residues, 1-26 (MQGLSFTFSAVTLFLVLCLQLGIIES), serve as a signal peptide directing secretion. Q27 is modified (pyrrolidone carboxylic acid). 2 disulfides stabilise this stretch: C65-C91 and C89-C123.

This sequence belongs to the PIP family. In terms of assembly, monomer. Interacts with AZGP1. Lacrimal and submaxillary glands.

It is found in the secreted. The chain is Prolactin-inducible protein homolog (Pip) from Mus musculus (Mouse).